Here is a 133-residue protein sequence, read N- to C-terminus: ATP synthase epsilon chain (133 aa).

It belongs to the ATPase epsilon chain family. In terms of assembly, F-type ATPases have 2 components, CF(1) - the catalytic core - and CF(0) - the membrane proton channel. CF(1) has five subunits: alpha(3), beta(3), gamma(1), delta(1), epsilon(1). CF(0) has three main subunits: a, b and c.

It localises to the cell membrane. In terms of biological role, produces ATP from ADP in the presence of a proton gradient across the membrane. The protein is ATP synthase epsilon chain of Clostridium botulinum (strain Langeland / NCTC 10281 / Type F).